The chain runs to 147 residues: D-aminoacyl-tRNA deacylase (147 aa).

The Gly-cisPro motif, important for rejection of L-amino acids signature appears at 136-137 (GP).

It belongs to the DTD family. As to quaternary structure, homodimer.

The protein resides in the cytoplasm. The enzyme catalyses glycyl-tRNA(Ala) + H2O = tRNA(Ala) + glycine + H(+). The catalysed reaction is a D-aminoacyl-tRNA + H2O = a tRNA + a D-alpha-amino acid + H(+). Functionally, an aminoacyl-tRNA editing enzyme that deacylates mischarged D-aminoacyl-tRNAs. Also deacylates mischarged glycyl-tRNA(Ala), protecting cells against glycine mischarging by AlaRS. Acts via tRNA-based rather than protein-based catalysis; rejects L-amino acids rather than detecting D-amino acids in the active site. By recycling D-aminoacyl-tRNA to D-amino acids and free tRNA molecules, this enzyme counteracts the toxicity associated with the formation of D-aminoacyl-tRNA entities in vivo and helps enforce protein L-homochirality. The chain is D-aminoacyl-tRNA deacylase from Streptococcus pneumoniae serotype 4 (strain ATCC BAA-334 / TIGR4).